We begin with the raw amino-acid sequence, 405 residues long: Phosphatidylinositol 5-phosphate 4-kinase type-2 alpha (405 aa).

In terms of domain architecture, PIPK spans 32 to 404 (ASDPLLSVLM…RFLDFIANIL (373 aa)). Positions 287–326 (QEEVECEENDGEDEGESDGTHPIGTPPDSPGNTLNSSLPL) are disordered. Acidic residues predominate over residues 288–303 (EEVECEENDGEDEGES).

Homodimer. Phosphorylated in tyrosines. Phosphorylation is induced by light and increases kinase activity.

Its subcellular location is the cell membrane. It localises to the nucleus. The protein localises to the lysosome. It is found in the cytoplasm. The enzyme catalyses a 1,2-diacyl-sn-glycero-3-phospho-(1D-myo-inositol-5-phosphate) + ATP = a 1,2-diacyl-sn-glycero-3-phospho-(1D-myo-inositol-4,5-bisphosphate) + ADP + H(+). The catalysed reaction is 1,2-dihexadecanoyl-sn-glycero-3-phospho-(1D-myo-inositol-5-phosphate) + ATP = 1,2-dihexadecanoyl-sn-glycero-3-phospho-(1D-myo-inositol-4,5-bisphosphate) + ADP + H(+). It catalyses the reaction 1,2-dihexadecanoyl-sn-glycero-3-phospho-(1D-myo-inositol-5-phosphate) + GTP = 1,2-dihexadecanoyl-sn-glycero-3-phospho-(1D-myo-inositol-4,5-bisphosphate) + GDP + H(+). In rod outer segments, activated by light. Catalyzes the phosphorylation of phosphatidylinositol 5-phosphate (PtdIns5P) on the fourth hydroxyl of the myo-inositol ring, to form phosphatidylinositol 4,5-bisphosphate (PtdIns(4,5)P2). Has both ATP- and GTP-dependent kinase activities. This is Phosphatidylinositol 5-phosphate 4-kinase type-2 alpha (PIP4K2A) from Gallus gallus (Chicken).